Here is a 268-residue protein sequence, read N- to C-terminus: ClpXP adapter protein SpxH (268 aa).

Belongs to the SpxH family. As to quaternary structure, interacts with Spx.

Its subcellular location is the cytoplasm. Its function is as follows. Adapter protein required for efficient degradation of Spx by ClpXP under non-stress conditions. Interaction with Spx stabilizes Spx and exposes the C-terminus of Spx for recognition and proteolysis by ClpXP. This Staphylococcus aureus (strain Mu3 / ATCC 700698) protein is ClpXP adapter protein SpxH.